Reading from the N-terminus, the 228-residue chain is Putative N-acetylmannosamine-6-phosphate 2-epimerase (228 aa).

The protein belongs to the NanE family.

It catalyses the reaction an N-acyl-D-glucosamine 6-phosphate = an N-acyl-D-mannosamine 6-phosphate. It functions in the pathway amino-sugar metabolism; N-acetylneuraminate degradation; D-fructose 6-phosphate from N-acetylneuraminate: step 3/5. In terms of biological role, converts N-acetylmannosamine-6-phosphate (ManNAc-6-P) to N-acetylglucosamine-6-phosphate (GlcNAc-6-P). The protein is Putative N-acetylmannosamine-6-phosphate 2-epimerase of Lactiplantibacillus plantarum (strain ATCC BAA-793 / NCIMB 8826 / WCFS1) (Lactobacillus plantarum).